The chain runs to 293 residues: N-acetylmannosamine kinase (293 aa).

ATP contacts are provided by residues 5–12 (AIDIGGTK) and 133–140 (GVGGGLVI). Positions 157, 167, 169, and 174 each coordinate Zn(2+).

The protein belongs to the ROK (NagC/XylR) family. NanK subfamily. Homodimer.

The enzyme catalyses an N-acyl-D-mannosamine + ATP = an N-acyl-D-mannosamine 6-phosphate + ADP + H(+). It functions in the pathway amino-sugar metabolism; N-acetylneuraminate degradation; D-fructose 6-phosphate from N-acetylneuraminate: step 2/5. Its function is as follows. Catalyzes the phosphorylation of N-acetylmannosamine (ManNAc) to ManNAc-6-P. The protein is N-acetylmannosamine kinase of Vibrio vulnificus (strain YJ016).